We begin with the raw amino-acid sequence, 293 residues long: Pantothenate synthetase (293 aa).

30 to 37 (MGYLHKGH) provides a ligand contact to ATP. The active-site Proton donor is the histidine 37. Residue glutamine 61 coordinates (R)-pantoate. Beta-alanine is bound at residue glutamine 61. Position 147 to 150 (147 to 150 (GEKD)) interacts with ATP. A (R)-pantoate-binding site is contributed by glutamine 153. Residues valine 176 and 184–187 (CSSR) contribute to the ATP site.

The protein belongs to the pantothenate synthetase family. Homodimer.

It is found in the cytoplasm. The enzyme catalyses (R)-pantoate + beta-alanine + ATP = (R)-pantothenate + AMP + diphosphate + H(+). Its pathway is cofactor biosynthesis; (R)-pantothenate biosynthesis; (R)-pantothenate from (R)-pantoate and beta-alanine: step 1/1. Its function is as follows. Catalyzes the condensation of pantoate with beta-alanine in an ATP-dependent reaction via a pantoyl-adenylate intermediate. This is Pantothenate synthetase from Brucella canis (strain ATCC 23365 / NCTC 10854 / RM-666).